Consider the following 235-residue polypeptide: Transmembrane emp24 domain-containing protein 9 (235 aa).

The signal sequence occupies residues 1–37 (MAAVRGVRVVGTSPGLLLGRGMRAFLLLLCLAARGGA). Topologically, residues 38–202 (LYFHIGETEK…RQTSESTNQR (165 aa)) are lumenal. The GOLD domain maps to 47–145 (KKCFIEEIPD…MLRVHLDIQV (99 aa)). The interval 121–160 (CLHSNSTKFSLFAGGMLRVHLDIQVGEHANDYAEIAAKDK) is required for interaction with STX17. A glycan (N-linked (GlcNAc...) asparagine) is linked at Asn-125. Residues 154–184 (EIAAKDKLSELQLRVRQLVEQVEQIQKEQNY) adopt a coiled-coil conformation. Residue Lys-160 is modified to N6-acetyllysine. Residues 203–222 (VLWWSILQTLILVAIGVWQM) traverse the membrane as a helical segment. The Cytoplasmic portion of the chain corresponds to 223–235 (RHLKSFFEAKKLV). Residues 228–229 (FF) carry the COPII vesicle coat-binding motif. A COPI vesicle coat-binding motif is present at residues 228–235 (FFEAKKLV).

It belongs to the EMP24/GP25L family. Monomer and homodimer in endoplasmic reticulum. Predominantly monomeric and to lesser extent homodimeric in endoplasmic reticulum-Golgi intermediate compartment and cis-Golgi network. Probably oligomerizes with other members of the EMP24/GP25L family such as TMED2, TMED7 and TMED10. Interacts with TMED5. Interacts (via C-terminus) with COPG1; the interaction involves dimeric TMED9. Interacts with PTPN2 and SPAST. Interacts with STX17; the interaction is direct. N-linked glycosylated containing high mannose.

The protein localises to the endoplasmic reticulum membrane. The protein resides in the golgi apparatus. It is found in the cis-Golgi network membrane. Its subcellular location is the endoplasmic reticulum-Golgi intermediate compartment membrane. It localises to the trans-Golgi network membrane. Functionally, appears to be involved in vesicular protein trafficking, mainly in the early secretory pathway. In COPI vesicle-mediated retrograde transport involved in the coatomer recruitment to membranes of the early secretory pathway. Increases coatomer-dependent activity of ARFGAP2. Thought to play a crucial role in the specific retention of p24 complexes in cis-Golgi membranes; specifically contributes to the coupled localization of TMED2 and TMED10 in the cis-Golgi network. May be involved in organization of intracellular membranes, such as of the ER-Golgi intermediate compartment and the Golgi apparatus. Involved in ER localization of PTPN2. The protein is Transmembrane emp24 domain-containing protein 9 (Tmed9) of Rattus norvegicus (Rat).